We begin with the raw amino-acid sequence, 231 residues long: 2-C-methyl-D-erythritol 4-phosphate cytidylyltransferase (231 aa).

It belongs to the IspD/TarI cytidylyltransferase family. IspD subfamily.

It carries out the reaction 2-C-methyl-D-erythritol 4-phosphate + CTP + H(+) = 4-CDP-2-C-methyl-D-erythritol + diphosphate. Its pathway is isoprenoid biosynthesis; isopentenyl diphosphate biosynthesis via DXP pathway; isopentenyl diphosphate from 1-deoxy-D-xylulose 5-phosphate: step 2/6. In terms of biological role, catalyzes the formation of 4-diphosphocytidyl-2-C-methyl-D-erythritol from CTP and 2-C-methyl-D-erythritol 4-phosphate (MEP). This Shewanella piezotolerans (strain WP3 / JCM 13877) protein is 2-C-methyl-D-erythritol 4-phosphate cytidylyltransferase.